A 336-amino-acid polypeptide reads, in one-letter code: Phosphate acyltransferase (336 aa).

The protein belongs to the PlsX family. As to quaternary structure, homodimer. Probably interacts with PlsY.

The protein resides in the cytoplasm. It catalyses the reaction a fatty acyl-[ACP] + phosphate = an acyl phosphate + holo-[ACP]. It participates in lipid metabolism; phospholipid metabolism. Catalyzes the reversible formation of acyl-phosphate (acyl-PO(4)) from acyl-[acyl-carrier-protein] (acyl-ACP). This enzyme utilizes acyl-ACP as fatty acyl donor, but not acyl-CoA. This Pseudomonas paraeruginosa (strain DSM 24068 / PA7) (Pseudomonas aeruginosa (strain PA7)) protein is Phosphate acyltransferase.